We begin with the raw amino-acid sequence, 143 residues long: Fluoride-specific ion channel FluC (143 aa).

Transmembrane regions (helical) follow at residues 6 to 26 (CILV…VSVL), 38 to 58 (TILI…LTLA), 70 to 90 (LFVM…SLQT), and 103 to 123 (MVNV…GHVV). Residues Gly-78 and Thr-81 each coordinate Na(+).

The protein belongs to the fluoride channel Fluc/FEX (TC 1.A.43) family.

The protein resides in the cell inner membrane. The enzyme catalyses fluoride(in) = fluoride(out). Its activity is regulated as follows. Na(+) is not transported, but it plays an essential structural role and its presence is essential for fluoride channel function. Functionally, fluoride-specific ion channel. Important for reducing fluoride concentration in the cell, thus reducing its toxicity. This chain is Fluoride-specific ion channel FluC, found in Methylobacterium radiotolerans (strain ATCC 27329 / DSM 1819 / JCM 2831 / NBRC 15690 / NCIMB 10815 / 0-1).